The chain runs to 583 residues: CD166 antigen (583 aa).

The signal sequence occupies residues 1–27 (MASKGSPSCRLVFCLLISAAVLRPGLG). Ig-like V-type domains follow at residues 28-120 (WYTV…TEDN) and 125-234 (PTLV…KTIY). Topologically, residues 28 to 527 (WYTVNSAYGD…NREKVNDQAK (500 aa)) are extracellular. 2 disulfides stabilise this stretch: Cys-43-Cys-113 and Cys-157-Cys-220. Asn-95, Asn-167, Asn-265, Asn-306, Asn-361, Asn-457, Asn-480, and Asn-499 each carry an N-linked (GlcNAc...) asparagine glycan. Ig-like C2-type domains are found at residues 245-328 (PTEQ…TTIT), 333-409 (DLSL…ESLT), and 416-501 (PQIK…LNVS). Intrachain disulfides connect Cys-270/Cys-313, Cys-354/Cys-392, and Cys-435/Cys-485. A helical transmembrane segment spans residues 528 to 549 (LIVGIVVGLLLAALVAGVVYWL). The Cytoplasmic portion of the chain corresponds to 550 to 583 (YMKKSKTASKHVNKDLGNMEENKKLEENNHKTEA). Residues 562–583 (NKDLGNMEENKKLEENNHKTEA) form a disordered region. The segment covering 569–583 (EENKKLEENNHKTEA) has biased composition (basic and acidic residues).

As to quaternary structure, homodimer. Interacts (via extracellular domain) with CD6 (via extracellular domain). Homodimerization and interaction with CD6 involve the same region and cannot occur simultaneously. The affinity for CD6 is much higher than the affinity for self-association. Interacts (via glycosylated extracellular domain) with LGALS1 and LGALS3. Interaction with LGALS1 or LGALS3 inhibits interaction with CD6. In terms of processing, the N-terminus is blocked. Post-translationally, glycosylated. In terms of tissue distribution, strongest expression in the lung, then brain, liver, and kidney. Present in the somatosensory system, basal ganglia, cortex, olfactory system, and circumventricular organs.

It is found in the cell membrane. Its subcellular location is the cell projection. It localises to the axon. The protein resides in the dendrite. In terms of biological role, cell adhesion molecule that mediates both heterotypic cell-cell contacts via its interaction with CD6, as well as homotypic cell-cell contacts. Promotes T-cell activation and proliferation via its interactions with CD6. Contributes to the formation and maturation of the immunological synapse via its interactions with CD6. Mediates homotypic interactions with cells that express ALCAM. Mediates attachment of dendritic cells onto endothelial cells via homotypic interaction. Inhibits endothelial cell migration and promotes endothelial tube formation via homotypic interactions. Required for normal organization of the lymph vessel network. Required for normal hematopoietic stem cell engraftment in the bone marrow. Plays a role in hematopoiesis; required for normal numbers of hematopoietic stem cells in bone marrow. Promotes in vitro osteoblast proliferation and differentiation. Promotes neurite extension, axon growth and axon guidance; axons grow preferentially on surfaces that contain ALCAM. Mediates outgrowth and pathfinding for retinal ganglion cell axons. This chain is CD166 antigen (Alcam), found in Rattus norvegicus (Rat).